Here is a 292-residue protein sequence, read N- to C-terminus: MDKVKIALQYMLPKHLLSRLVGKLAASEAGALTTAAIKWFIKQYKIDMSEAAQSEPEAYKSFNDFFTRALKPGIRPINTAANIMVHPVDGAVSQLGPIKDGRIFQAKGHHYSSLTLLGDQAEDAKRFEGGDFATIYLAPKDYHRIHMPIKGTLSKMTYVPGELFSVNPLTARHVPGLFARNERVVAIFETELGPLAMVLVGATIVASIETVWAGTITPPTGKQVFTWEYPTVGPDAITLDKGEEMGRFKLGSTVVMLFAKDAIDTFAEGVEPEAVTRMGQAFANLKNQASAD.

Catalysis depends on charge relay system; for autoendoproteolytic cleavage activity residues D89, H146, and S252. Residue S252 is the Schiff-base intermediate with substrate; via pyruvic acid; for decarboxylase activity of the active site. Residue S252 is modified to Pyruvic acid (Ser); by autocatalysis.

This sequence belongs to the phosphatidylserine decarboxylase family. PSD-B subfamily. Prokaryotic type I sub-subfamily. In terms of assembly, heterodimer of a large membrane-associated beta subunit and a small pyruvoyl-containing alpha subunit. Requires pyruvate as cofactor. Is synthesized initially as an inactive proenzyme. Formation of the active enzyme involves a self-maturation process in which the active site pyruvoyl group is generated from an internal serine residue via an autocatalytic post-translational modification. Two non-identical subunits are generated from the proenzyme in this reaction, and the pyruvate is formed at the N-terminus of the alpha chain, which is derived from the carboxyl end of the proenzyme. The autoendoproteolytic cleavage occurs by a canonical serine protease mechanism, in which the side chain hydroxyl group of the serine supplies its oxygen atom to form the C-terminus of the beta chain, while the remainder of the serine residue undergoes an oxidative deamination to produce ammonia and the pyruvoyl prosthetic group on the alpha chain. During this reaction, the Ser that is part of the protease active site of the proenzyme becomes the pyruvoyl prosthetic group, which constitutes an essential element of the active site of the mature decarboxylase.

The protein localises to the cell membrane. The enzyme catalyses a 1,2-diacyl-sn-glycero-3-phospho-L-serine + H(+) = a 1,2-diacyl-sn-glycero-3-phosphoethanolamine + CO2. Its pathway is phospholipid metabolism; phosphatidylethanolamine biosynthesis; phosphatidylethanolamine from CDP-diacylglycerol: step 2/2. Its function is as follows. Catalyzes the formation of phosphatidylethanolamine (PtdEtn) from phosphatidylserine (PtdSer). This is Phosphatidylserine decarboxylase proenzyme from Shewanella sp. (strain MR-7).